Consider the following 237-residue polypeptide: Ribonuclease PH (237 aa).

Phosphate-binding positions include R86 and G124–R126.

It belongs to the RNase PH family. Homohexameric ring arranged as a trimer of dimers.

It carries out the reaction tRNA(n+1) + phosphate = tRNA(n) + a ribonucleoside 5'-diphosphate. Functionally, phosphorolytic 3'-5' exoribonuclease that plays an important role in tRNA 3'-end maturation. Removes nucleotide residues following the 3'-CCA terminus of tRNAs; can also add nucleotides to the ends of RNA molecules by using nucleoside diphosphates as substrates, but this may not be physiologically important. Probably plays a role in initiation of 16S rRNA degradation (leading to ribosome degradation) during starvation. In Pseudoalteromonas translucida (strain TAC 125), this protein is Ribonuclease PH.